A 123-amino-acid chain; its full sequence is MVRATGSVASRARRKRILKQAKGFWGDRKGHFRQSRSSVMRAMAFNYMHRKDRKGDFRSLWISRLNVASRIHGLSYSRLINGLKQAGINLNRKMLSEMAIHDPQGFALVAAQAKLALEASIQG.

The protein belongs to the bacterial ribosomal protein bL20 family.

Its function is as follows. Binds directly to 23S ribosomal RNA and is necessary for the in vitro assembly process of the 50S ribosomal subunit. It is not involved in the protein synthesizing functions of that subunit. This Chlamydia muridarum (strain MoPn / Nigg) protein is Large ribosomal subunit protein bL20 (rplT).